The sequence spans 463 residues: 4-hydroxybenzoate polyprenyltransferase, mitochondrial (463 aa).

Disordered stretches follow at residues 28–48 (NNNT…STFN) and 133–152 (LLDD…NNKP). Residues 137–150 (NNSNSNNNNNSNNN) show a composition bias toward low complexity. The next 7 helical transmembrane spans lie at 181 to 201 (IGVW…APAG), 206 to 226 (LKTM…GCVI), 257 to 277 (LIFL…SLNY), 305 to 325 (FVLG…IAGS), 330 to 350 (IVAP…TIYA), 375 to 395 (IILS…GIAA), and 431 to 451 (FISN…SKLL).

The protein belongs to the UbiA prenyltransferase family. It depends on Mg(2+) as a cofactor.

It localises to the mitochondrion inner membrane. The catalysed reaction is an all-trans-polyprenyl diphosphate + 4-hydroxybenzoate = a 4-hydroxy-3-(all-trans-polyprenyl)benzoate + diphosphate. The protein operates within cofactor biosynthesis; ubiquinone biosynthesis. Catalyzes the prenylation of para-hydroxybenzoate (PHB) with an all-trans polyprenyl group. Mediates the second step in the final reaction sequence of coenzyme Q (CoQ) biosynthesis, which is the condensation of the polyisoprenoid side chain with PHB. Its function is as follows. Catalyzes the prenylation of para-hydroxybenzoate (PHB) with an all-trans polyprenyl group. Mediates the second step in the final reaction sequence of coenzyme Q (CoQ) biosynthesis, which is the condensation of the polyisoprenoid side chain with PHB, generating the first membrane-bound Q intermediate. The polypeptide is 4-hydroxybenzoate polyprenyltransferase, mitochondrial (Dictyostelium discoideum (Social amoeba)).